We begin with the raw amino-acid sequence, 30 residues long: Bacteriocin SRCAM 37 (30 aa).

Belongs to the bacteriocin class IIA/YGNGV family.

It localises to the secreted. Bacteriocin with antibacterial activity against C.jejuni. The polypeptide is Bacteriocin SRCAM 37 (Paenibacillus polymyxa (Bacillus polymyxa)).